Here is a 306-residue protein sequence, read N- to C-terminus: Palmitoyl-protein thioesterase 1 (306 aa).

Positions 1–27 are cleaved as a signal peptide; sequence MASPSCLWLLAVALLPWTCAARALHHL. Cystine bridges form between Cys45-Cys46, Cys96-Cys128, and Cys152-Cys160. The active site involves Ser115. Residues Asn197, Asn212, and Asn232 are each glycosylated (N-linked (GlcNAc...) asparagine). Active-site residues include Asp233 and His289.

This sequence belongs to the palmitoyl-protein thioesterase family. In terms of assembly, interacts with CLN5, ATP5F1A and ATP5F1B. Glycosylated.

The protein localises to the lysosome. It localises to the secreted. The protein resides in the golgi apparatus. Its subcellular location is the endoplasmic reticulum. It carries out the reaction S-hexadecanoyl-L-cysteinyl-[protein] + H2O = L-cysteinyl-[protein] + hexadecanoate + H(+). It catalyses the reaction hexadecanoyl-CoA + H2O = hexadecanoate + CoA + H(+). The catalysed reaction is S-hexadecanoyl-N-acetylcysteamine + H2O = N-acetylcysteamine + hexadecanoate + H(+). The enzyme catalyses S-hexadecanoyl-N-acetylcysteine methyl ester + H2O = N-acetylcysteine methyl ester + hexadecanoate + H(+). With respect to regulation, palmitoylation reduces PPT1 enzymatic activity. In terms of biological role, has thioesterase activity against fatty acid thioesters with 14 -18 carbons, including palmitoyl-CoA, S-palmitoyl-N-acetylcysteamine, and palmitoylated proteins. In contrast to PPT2, PPT1 can hydrolyze palmitoylated proteins and palmitoylcysteine. The polypeptide is Palmitoyl-protein thioesterase 1 (PPT1) (Macaca fascicularis (Crab-eating macaque)).